The following is an 86-amino-acid chain: Small ribosomal subunit protein bS16 (86 aa).

The protein belongs to the bacterial ribosomal protein bS16 family.

The sequence is that of Small ribosomal subunit protein bS16 from Methylacidiphilum infernorum (isolate V4) (Methylokorus infernorum (strain V4)).